A 297-amino-acid chain; its full sequence is MIPIKTPVGEFKVWIKRFGTNPKIKVLLLHGGPAMTHEYMECFETFFQREGFEFYEYDQLGSYYSDQPKDSSLWTIDRFVDEVEQVRKAINADKDNFYVLGNSWGGILAMEYALKYQQNMKGLLVSNMMASAPEYGKYADEVLAKQMKPEILKEIRDLEAKKDFENPRYMELLLPNFYKEHLCRLNEWPDGLNRASKHVNGEIYTLMQGPSEFGISGRLAKWDIKNRLHEITIPTLMIGAKYDTMDPKAMEEQSKLVKKGRYLYCPNGSHLAMWDDQKVFMNGVIQFINDVNDEKVN.

The AB hydrolase-1 domain maps to 26 to 131 (VLLLHGGPAM…GLLVSNMMAS (106 aa)). The active-site Nucleophile is the Ser-103. Asp-243 is a catalytic residue. His-270 functions as the Proton donor in the catalytic mechanism.

The protein belongs to the peptidase S33 family. As to quaternary structure, monomer.

It catalyses the reaction Release of N-terminal proline from a peptide.. Functionally, releases the N-terminal proline from various substrates. The sequence is that of Proline iminopeptidase (fpaP) from Flavobacterium johnsoniae (strain ATCC 17061 / DSM 2064 / JCM 8514 / BCRC 14874 / CCUG 350202 / NBRC 14942 / NCIMB 11054 / UW101) (Cytophaga johnsonae).